The following is a 453-amino-acid chain: Tol-Pal system protein TolB (453 aa).

Residues 1–34 (MYLIIKKTHKLPHWLQKVSLSIMLIIFLWKPALL) form the signal peptide.

This sequence belongs to the TolB family. The Tol-Pal system is composed of five core proteins: the inner membrane proteins TolA, TolQ and TolR, the periplasmic protein TolB and the outer membrane protein Pal. They form a network linking the inner and outer membranes and the peptidoglycan layer.

It is found in the periplasm. Its function is as follows. Part of the Tol-Pal system, which plays a role in outer membrane invagination during cell division and is important for maintaining outer membrane integrity. TolB occupies a key intermediary position in the Tol-Pal system because it communicates directly with both membrane-embedded components, Pal in the outer membrane and TolA in the inner membrane. The polypeptide is Tol-Pal system protein TolB (Blochmanniella pennsylvanica (strain BPEN)).